The chain runs to 114 residues: uncharacterized protein (114 aa).

2 disordered regions span residues 26–45 (GMKQKRKPASSEPTPEDALG) and 72–98 (PKGSEPPGRSAGLQGATERSGRPSVQA).

This is an uncharacterized protein from Homo sapiens (Human).